Reading from the N-terminus, the 223-residue chain is UPF0441 protein YgiB (223 aa).

The segment covering 178–195 (TVPKTAMAPKPATTTTVT) has biased composition (low complexity). A disordered region spans residues 178-223 (TVPKTAMAPKPATTTTVTRGGFGESVAKQSTMQRSATGTSSRSMGG). A compositionally biased stretch (polar residues) spans 204–223 (AKQSTMQRSATGTSSRSMGG).

This sequence belongs to the UPF0441 family.

This Shigella boydii serotype 18 (strain CDC 3083-94 / BS512) protein is UPF0441 protein YgiB.